Consider the following 528-residue polypeptide: Poly(A) RNA polymerase GLD2 (528 aa).

Disordered regions lie at residues 1–41 (MYPN…QPQQ) and 99–121 (RDQS…KRRS). Low complexity-rich tracts occupy residues 16 to 32 (PCEQ…EQPL) and 102 to 113 (SPLISPASPSSS). Mg(2+)-binding residues include aspartate 259 and aspartate 261. A PAP-associated domain is found at 428-481 (LGDLLLGFLKYFAIEFDWSKDIISVREAKALPRSDDYEWRNKFICVEEPYDRTN).

The protein belongs to the DNA polymerase type-B-like family. GLD2 subfamily. In terms of assembly, component of a complex at least composed of cpeb1, cpsf1, tent2/gld2, pabpc1/ePAB, parn and sympk. Following oocyte maturation, parn is expelled from the complex. Interacts with rbm9 and sympk. Mg(2+) serves as cofactor. It depends on Mn(2+) as a cofactor.

It is found in the cytoplasm. It catalyses the reaction RNA(n) + ATP = RNA(n)-3'-adenine ribonucleotide + diphosphate. Its function is as follows. Cytoplasmic poly(A) RNA polymerase that adds successive AMP monomers to the 3'-end of specific RNAs, forming a poly(A) tail. In contrast to the canonical nuclear poly(A) RNA polymerase, it only adds poly(A) to selected cytoplasmic mRNAs during oocyte maturation. Plays a central role during oocyte maturation by mediating polyadenylation of dormant mRNAs, which contain 5'AAUAAA-3' sequence in their 3'-UTR. In immature oocytes, polyadenylation of poly(A) tails is counteracted by the ribonuclease parn. During maturation parn is excluded from the ribonucleoprotein complex, allowing poly(A) elongation and activation of mRNAs. May not play a role in replication-dependent histone mRNA degradation. This chain is Poly(A) RNA polymerase GLD2 (tent2), found in Xenopus tropicalis (Western clawed frog).